A 343-amino-acid chain; its full sequence is Holliday junction branch migration complex subunit RuvB (343 aa).

The segment at Met1–Tyr186 is large ATPase domain (RuvB-L). Residues Leu25, Arg26, Gly67, Lys70, Thr71, Ser72, Glu133–Phe135, Arg176, Tyr186, and Arg223 contribute to the ATP site. Mg(2+) is bound at residue Thr71. Positions Asp187–Gly257 are small ATPAse domain (RuvB-S). The segment at Ala260–Phe343 is head domain (RuvB-H). Arg296, Arg315, and Arg320 together coordinate DNA.

Belongs to the RuvB family. As to quaternary structure, homohexamer. Forms an RuvA(8)-RuvB(12)-Holliday junction (HJ) complex. HJ DNA is sandwiched between 2 RuvA tetramers; dsDNA enters through RuvA and exits via RuvB. An RuvB hexamer assembles on each DNA strand where it exits the tetramer. Each RuvB hexamer is contacted by two RuvA subunits (via domain III) on 2 adjacent RuvB subunits; this complex drives branch migration. In the full resolvosome a probable DNA-RuvA(4)-RuvB(12)-RuvC(2) complex forms which resolves the HJ.

The protein localises to the cytoplasm. The catalysed reaction is ATP + H2O = ADP + phosphate + H(+). Its function is as follows. The RuvA-RuvB-RuvC complex processes Holliday junction (HJ) DNA during genetic recombination and DNA repair, while the RuvA-RuvB complex plays an important role in the rescue of blocked DNA replication forks via replication fork reversal (RFR). RuvA specifically binds to HJ cruciform DNA, conferring on it an open structure. The RuvB hexamer acts as an ATP-dependent pump, pulling dsDNA into and through the RuvAB complex. RuvB forms 2 homohexamers on either side of HJ DNA bound by 1 or 2 RuvA tetramers; 4 subunits per hexamer contact DNA at a time. Coordinated motions by a converter formed by DNA-disengaged RuvB subunits stimulates ATP hydrolysis and nucleotide exchange. Immobilization of the converter enables RuvB to convert the ATP-contained energy into a lever motion, pulling 2 nucleotides of DNA out of the RuvA tetramer per ATP hydrolyzed, thus driving DNA branch migration. The RuvB motors rotate together with the DNA substrate, which together with the progressing nucleotide cycle form the mechanistic basis for DNA recombination by continuous HJ branch migration. Branch migration allows RuvC to scan DNA until it finds its consensus sequence, where it cleaves and resolves cruciform DNA. This is Holliday junction branch migration complex subunit RuvB from Myxococcus xanthus (strain DK1622).